We begin with the raw amino-acid sequence, 430 residues long: Ribosomal protein uS12 methylthiotransferase RimO (430 aa).

The 118-residue stretch at 2–119 folds into the MTTase N-terminal domain; it reads ISVYSISLGC…WPEMIGRALG (118 aa). 6 residues coordinate [4Fe-4S] cluster: C11, C46, C81, C145, C149, and C152. Residues 131–361 form the Radical SAM core domain; it reads STGPSYAYLK…MEVQAEISEE (231 aa). The region spanning 364–430 is the TRAM domain; it reads EGFTGSDEDV…SRTYDLVALS (67 aa).

Belongs to the methylthiotransferase family. RimO subfamily. [4Fe-4S] cluster is required as a cofactor.

Its subcellular location is the cytoplasm. The enzyme catalyses L-aspartate(89)-[ribosomal protein uS12]-hydrogen + (sulfur carrier)-SH + AH2 + 2 S-adenosyl-L-methionine = 3-methylsulfanyl-L-aspartate(89)-[ribosomal protein uS12]-hydrogen + (sulfur carrier)-H + 5'-deoxyadenosine + L-methionine + A + S-adenosyl-L-homocysteine + 2 H(+). In terms of biological role, catalyzes the methylthiolation of an aspartic acid residue of ribosomal protein uS12. The polypeptide is Ribosomal protein uS12 methylthiotransferase RimO (Oleidesulfovibrio alaskensis (strain ATCC BAA-1058 / DSM 17464 / G20) (Desulfovibrio alaskensis)).